The following is a 1722-amino-acid chain: Signal-induced proliferation-associated 1-like protein 2 (1722 aa).

Disordered stretches follow at residues 1 to 29 (MSDPRPSQAEKHKLGRAASKFKDPSRAMQ) and 45 to 73 (MGPATLNTSSLSEGGGGGGGPANGTPAVP). Gly residues predominate over residues 57 to 66 (EGGGGGGGPA). Ser-149, Ser-380, and Ser-384 each carry phosphoserine. The disordered stretch occupies residues 362–404 (ASAASQTPVPVGPAGGCESPLGSKEDLNAKENPDADEGDGKSN). The segment covering 384–403 (SKEDLNAKENPDADEGDGKS) has biased composition (basic and acidic residues). A Rap-GAP domain is found at 596–813 (LLKLDEQGLS…RTRHEYLKDL (218 aa)). The region spanning 951 to 1027 (EMTLRRNGLG…VKVVIIQPHE (77 aa)) is the PDZ domain. Residue Ser-1030 is modified to Phosphoserine. Disordered regions lie at residues 1068 to 1172 (HRVP…DHED), 1197 to 1246 (ERAL…FGSG), and 1328 to 1361 (AADGSMGDLSEVSSHSSGSHRSGSPSTHCSKSTG). Composition is skewed to low complexity over residues 1091–1103 (LQCQPLLQQAQAA) and 1120–1131 (SSPSNQSSSSDP). The span at 1197 to 1218 (ERALQKDGSCKDSPNKLSHIGD) shows a compositional bias: basic and acidic residues. The segment covering 1220-1237 (SCSSHSSSNTLSSNTSSN) has biased composition (low complexity). At Ser-1245 the chain carries Phosphoserine. Low complexity predominate over residues 1328-1355 (AADGSMGDLSEVSSHSSGSHRSGSPSTH). A phosphoserine mark is found at Ser-1461, Ser-1472, Ser-1478, Ser-1488, Ser-1549, Ser-1552, and Ser-1591. Residues 1652–1712 (STLTGKVNQL…ATAQLRTFTE (61 aa)) adopt a coiled-coil conformation.

This is Signal-induced proliferation-associated 1-like protein 2 (Sipa1l2) from Rattus norvegicus (Rat).